The primary structure comprises 739 residues: Ent-kaurene synthase-like 3 (739 aa).

Mg(2+) is bound by residues aspartate 475, aspartate 479, asparagine 619, threonine 623, and glutamate 627. The DDXXD motif signature appears at 475–479; sequence DDFFD.

It belongs to the terpene synthase family. It depends on Mg(2+) as a cofactor. In terms of tissue distribution, expressed in roots and stems.

This is Ent-kaurene synthase-like 3 (KSL3) from Oryza sativa subsp. japonica (Rice).